An 87-amino-acid chain; its full sequence is Small ribosomal subunit protein uS15c (87 aa).

Belongs to the universal ribosomal protein uS15 family. Part of the 30S ribosomal subunit.

Its subcellular location is the plastid. It localises to the chloroplast. In Coffea arabica (Arabian coffee), this protein is Small ribosomal subunit protein uS15c (rps15).